Here is a 344-residue protein sequence, read N- to C-terminus: MLAITALAGLDLAQWQALLNNVAFAVCLGAMLFYWGGAAFPQVQLLSELGLAGMIGANLTIAALLTARWIDAGYFPLSNLYESLFFLAWGITALHLLALHWTRSRWVGVTTAPLATGVVAFAALALPADMQEAQPLVPALQSNWLMMHVTVMLLAYAALLVGSLLAIAFLIVTRGQEVQLKGNSLGLQFGPSQPATHPEWTEATLPSPAAELVYAGIRSPRPAEPPPQPAPEGIPLQRLSLAEILDNTSYRLIGLGFPLLTIGIIAGAVWANEAWGTYWSWDPKETWALITWLVFAAYLHARITKGWQGKRPALLASLGFGVVWVCYLGVNFLGKGLHSYGWFF.

A run of 8 helical transmembrane segments spans residues 21-41 (NVAF…AAFP), 45-65 (LLSE…AALL), 80-100 (LYES…LALH), 106-126 (WVGV…ALAL), 151-171 (VMLL…AFLI), 252-272 (LIGL…VWAN), 287-307 (WALI…TKGW), and 313-333 (ALLA…VNFL).

The protein belongs to the CcmF/CycK/Ccl1/NrfE/CcsA family. As to quaternary structure, may interact with ccs1.

It localises to the cellular thylakoid membrane. Its function is as follows. Required during biogenesis of c-type cytochromes (cytochrome c6 and cytochrome f) at the step of heme attachment. The protein is Cytochrome c biogenesis protein CcsA of Synechococcus sp. (strain JA-3-3Ab) (Cyanobacteria bacterium Yellowstone A-Prime).